A 340-amino-acid chain; its full sequence is MTLISSPIKRLDNKPPIWLMRQAGRYLSEYMAVRKEVKNFLEFCYDVDKATEVTLQPIKRFGFDAAIIFSDILVLPHALGWEVDFKENIGPLLKQFKSKEDFKYLQDNSNDKLEKVYEIVKKVRKELPKSTSLIGFAGSPWTVMTYMLEGKGKQDFRVSKKFIYENKDLAKELLNFITEKTIHHLINQIKSGANIIKIFDSWAGILPEEEFKKFVIEPTKKIIKSIKGYFPDIPIITFPKGAGLLYEKFLEEVPTDIIAIDPLIPLEKMKLWSNKVTVQGNLDPVILLTNKKIIKEKIHKILSIMENKNFIFNLGHGILPETPPENVEFLVKCIREYEYK.

Residues 21–25, F40, D71, Y146, S201, and H316 each bind substrate; that span reads RQAGR.

Belongs to the uroporphyrinogen decarboxylase family. As to quaternary structure, homodimer.

It localises to the cytoplasm. It carries out the reaction uroporphyrinogen III + 4 H(+) = coproporphyrinogen III + 4 CO2. Its pathway is porphyrin-containing compound metabolism; protoporphyrin-IX biosynthesis; coproporphyrinogen-III from 5-aminolevulinate: step 4/4. Catalyzes the decarboxylation of four acetate groups of uroporphyrinogen-III to yield coproporphyrinogen-III. The sequence is that of Uroporphyrinogen decarboxylase from Rickettsia bellii (strain RML369-C).